The chain runs to 315 residues: Initiation factor TFIIB homolog (315 aa).

This sequence belongs to the asfivirus C315R family.

Putative initation factor. The chain is Initiation factor TFIIB homolog from Ornithodoros (relapsing fever ticks).